We begin with the raw amino-acid sequence, 101 residues long: Cell division protein FtsB (101 aa).

Over 1-3 (MRI) the chain is Cytoplasmic. Residues 4–21 (VIYSMLVLLIAIQYPLWL) traverse the membrane as a helical segment. Over 22–101 (GKGGWLKVYE…KSSDTQVTKQ (80 aa)) the chain is Periplasmic. The stretch at 33 to 53 (ERQVELQEAKNSLLALRNAKL) forms a coiled coil.

This sequence belongs to the FtsB family. Part of a complex composed of FtsB, FtsL and FtsQ.

Its subcellular location is the cell inner membrane. In terms of biological role, essential cell division protein. May link together the upstream cell division proteins, which are predominantly cytoplasmic, with the downstream cell division proteins, which are predominantly periplasmic. The sequence is that of Cell division protein FtsB from Polynucleobacter necessarius subsp. necessarius (strain STIR1).